The chain runs to 261 residues: Cytochrome c oxidase subunit 3 (261 aa).

The Mitochondrial matrix segment spans residues 1–15 (MTHQTHAYHMVNPSP). The chain crosses the membrane as a helical span at residues 16–33 (WPLTGAFSALLLTSGLVM). The Mitochondrial intermembrane segment spans residues 34 to 38 (WFHYN). Residues 39-62 (SITLLTLGLLTNILTMYQWWRDVI) form a helical membrane-spanning segment. Topologically, residues 63 to 77 (REGTYQGHHTPIVQK) are mitochondrial matrix. Residues 78–99 (GLRYGMILFIVSEVFFFAGFFW) traverse the membrane as a helical segment. At 100–129 (AFYHSSLVPTHDLGGCWPPTGISPLNPLEV) the chain is on the mitochondrial intermembrane side. The chain crosses the membrane as a helical span at residues 130–150 (PLLNTSVLLASGVSITWAHHS). Over 151-156 (LMEGKR) the chain is Mitochondrial matrix. Residues 157-178 (NHMNQALLITIMLGLYFTILQA) traverse the membrane as a helical segment. At 179–198 (SEYFETSFSISDGIYGSTFF) the chain is on the mitochondrial intermembrane side. The helical transmembrane segment at 199 to 224 (MATGFHGLHVIIGSTFLIVCLLRQLK) threads the bilayer. Residues 225-232 (FHFTSKHH) lie on the Mitochondrial matrix side of the membrane. The helical transmembrane segment at 233 to 255 (FGFEAAAWYWHFVDVVWLFLYVS) threads the bilayer. At 256-261 (IYWWGS) the chain is on the mitochondrial intermembrane side.

It belongs to the cytochrome c oxidase subunit 3 family. Component of the cytochrome c oxidase (complex IV, CIV), a multisubunit enzyme composed of 14 subunits. The complex is composed of a catalytic core of 3 subunits MT-CO1, MT-CO2 and MT-CO3, encoded in the mitochondrial DNA, and 11 supernumerary subunits COX4I, COX5A, COX5B, COX6A, COX6B, COX6C, COX7A, COX7B, COX7C, COX8 and NDUFA4, which are encoded in the nuclear genome. The complex exists as a monomer or a dimer and forms supercomplexes (SCs) in the inner mitochondrial membrane with NADH-ubiquinone oxidoreductase (complex I, CI) and ubiquinol-cytochrome c oxidoreductase (cytochrome b-c1 complex, complex III, CIII), resulting in different assemblies (supercomplex SCI(1)III(2)IV(1) and megacomplex MCI(2)III(2)IV(2)).

It is found in the mitochondrion inner membrane. It carries out the reaction 4 Fe(II)-[cytochrome c] + O2 + 8 H(+)(in) = 4 Fe(III)-[cytochrome c] + 2 H2O + 4 H(+)(out). Component of the cytochrome c oxidase, the last enzyme in the mitochondrial electron transport chain which drives oxidative phosphorylation. The respiratory chain contains 3 multisubunit complexes succinate dehydrogenase (complex II, CII), ubiquinol-cytochrome c oxidoreductase (cytochrome b-c1 complex, complex III, CIII) and cytochrome c oxidase (complex IV, CIV), that cooperate to transfer electrons derived from NADH and succinate to molecular oxygen, creating an electrochemical gradient over the inner membrane that drives transmembrane transport and the ATP synthase. Cytochrome c oxidase is the component of the respiratory chain that catalyzes the reduction of oxygen to water. Electrons originating from reduced cytochrome c in the intermembrane space (IMS) are transferred via the dinuclear copper A center (CU(A)) of subunit 2 and heme A of subunit 1 to the active site in subunit 1, a binuclear center (BNC) formed by heme A3 and copper B (CU(B)). The BNC reduces molecular oxygen to 2 water molecules using 4 electrons from cytochrome c in the IMS and 4 protons from the mitochondrial matrix. This is Cytochrome c oxidase subunit 3 (mt-Co3) from Mus musculus (Mouse).